A 407-amino-acid chain; its full sequence is Growth/differentiation factor 11 (407 aa).

Residues M1–A24 form the signal peptide. A propeptide spanning residues A25–R298 is cleaved from the precursor. The N-linked (GlcNAc...) asparagine glycan is linked to N94. Disulfide bonds link C304–C314, C313–C372, C341–C404, and C345–C406.

It belongs to the TGF-beta family. Homodimer; disulfide-linked. Interacts directly with ACVR2B. Interacts directly with ACVR2A. Interacts with ACVR1B, TGFBR1 and ACVR1C in an ACVR2B-dependent manner. Interacts with FST isoform 2/FS-288. In terms of processing, synthesized as large precursor molecule that undergoes proteolytic cleavage by furin-like proteases. This produces an inactive form consisting of the mature C-terminal portion non-covalently bound to its cleaved N-terminal propeptide. Activation of the mature form requires additional cleavage of the propeptide by a tolloid-like metalloproteinase. As to expression, in the embryo, strong expression is seen in the palatal epithelia, including the medial edge epithelial and midline epithelial seam of the palatal shelves. Less pronounced expression is also seen throughout the palatal shelf and tongue mesenchyme.

It is found in the secreted. In terms of biological role, secreted signal that acts globally to regulate anterior/posterior axial patterning during development. May play critical roles in patterning both mesodermal and neural tissues. It is required for proper vertebral patterning and orofacial development. Signals through activin receptors type-2, ACVR2A and ACVR2B, and activin receptors type-1, ACVR1B, ACVR1C and TGFBR1 leading to the phosphorylation of SMAD2 and SMAD3. This is Growth/differentiation factor 11 (GDF11) from Homo sapiens (Human).